A 391-amino-acid polypeptide reads, in one-letter code: Probable sugar efflux transporter (391 aa).

12 helical membrane passes run 16–36 (VFVF…PVAL), 51–71 (VGLM…PLML), 82–102 (LLFL…AWNF), 110–130 (MGIA…VIRV), 138–158 (QALG…LPLG), 170–190 (TFGV…KLLP), 210–230 (PLLM…FTTY), 247–267 (ITTL…FLFG), 277–297 (FIAF…VFKN), 300–320 (WVVF…GISL), 338–358 (IYSG…SIVI), and 361–381 (LGLG…LFWL).

This sequence belongs to the major facilitator superfamily. SotB (TC 2.A.1.2) family.

It localises to the cell inner membrane. In terms of biological role, involved in the efflux of sugars. The physiological role may be the reduction of the intracellular concentration of toxic sugars or sugar metabolites. The protein is Probable sugar efflux transporter of Helicobacter pylori (strain ATCC 700392 / 26695) (Campylobacter pylori).